The following is a 477-amino-acid chain: GH30 family xylanase (477 aa).

The first 19 residues, 1-19 (MYSLLIALLCAGTAVDAQA), serve as a signal peptide directing secretion. Residues asparagine 194, asparagine 237, and asparagine 331 are each glycosylated (N-linked (GlcNAc...) asparagine).

Belongs to the glycosyl hydrolase 30 family.

It is found in the secreted. Its activity is regulated as follows. Activity is enhanced by 10 mM Co(2+), Cu 2(2+) and Mn(2+) to levels as high as 44%. Partial inhibition of activity from 5 to 15% is observed in the presence of the following compouinds at a centration of 10 mM (from higher inhibition to lower): EDTA &gt; Mg(2+) &gt; urea, Zn(2+) &gt; Fe(3+). Xylanase exhibiting endo- and exo-xylanase activity. Shows the highest activity toward beechwood glucuronoxylan, which consists of a beta-1,4-linked xylose backbone decorated with the methylated form of D-glucuronic acid (MeGlcA) attached directly to the main chain at xylose C2. Also acts against wheat arabinoxylan, a xylan without MeGlcA substituents along the main chain, but the xylanase activity is about two orders of magnitude lower than that achieved in the case of beechwood xylan. Shows no activity against carob galactomannan, konjac glucomannan, or barley beta-glucan. The recombinant xylanase also exhibits an exo-activity by releasing processively disaccharide units from the non-reducing end of linear and decorated xylooligosaccharides (XOS). In Thermothelomyces thermophilus (strain ATCC 42464 / BCRC 31852 / DSM 1799) (Sporotrichum thermophile), this protein is GH30 family xylanase.